The chain runs to 163 residues: MASEHSFDISAALDKQELKNAFEQAKKELDSRYDLKGIKCEIDLSEKENIFKLSSSSEGKLDVLKDIVISKLIKRGINPNAIKELSRESGAMFRLNLKANDAIDSENAKKINKAIKDSKLKVNSSIRGEEIRVVAKQIDDLQAVMKLVKELDLELNVSFKNLK.

The protein belongs to the YajQ family.

In terms of biological role, nucleotide-binding protein. The protein is Nucleotide-binding protein CJJ81176_0398 of Campylobacter jejuni subsp. jejuni serotype O:23/36 (strain 81-176).